The chain runs to 168 residues: MAAVTSAAVSIPSFTGLKAASASNAKVSASAKVSASPLPRLSIKASLKEVGAAVVATAASAMIASNAMAVDVLLGADDGSLAFVPSEFSVPAGEKIVFKNNAGFPHNVLFDEDAVPSGVDVSKISMSEEDLLNAKGETFEVALSDKGEYTFYCSPHQGAGMVGKVIVN.

Residues 1 to 69 (MAAVTSAAVS…SAMIASNAMA (69 aa)) constitute a chloroplast transit peptide. A Plastocyanin-like domain is found at 70–168 (VDVLLGADDG…AGMVGKVIVN (99 aa)). Residues H106, C153, H156, and M161 each contribute to the Cu cation site.

Belongs to the plastocyanin family. Cu(2+) serves as cofactor.

It is found in the plastid. It localises to the chloroplast thylakoid membrane. Participates in electron transfer between P700 and the cytochrome b6-f complex in photosystem I. The chain is Plastocyanin B, chloroplastic (PETE) from Populus nigra (Lombardy poplar).